The primary structure comprises 562 residues: Nucleoprotein (562 aa).

Residues 53–238 (MRRERRDDND…ITQEESQINI (186 aa)) are binding site for the cap structure m7GTP. Residues Asp381 and Glu383 each contribute to the Mn(2+) site. Residues Glu391, Cys498, His501, and Cys522 each coordinate Zn(2+). Asp526 provides a ligand contact to Mn(2+).

Belongs to the arenaviridae nucleocapsid protein family. As to quaternary structure, homomultimerizes to form the nucleocapsid. Binds to viral genomic RNA. Interacts with glycoprotein G2. Interacts with protein Z; this interaction probably directs the encapsidated genome to budding sites. Interacts with protein L; this interaction does not interfere with Z-L interaction. Interacts with host IKBKE (via Protein kinase domain); the interaction inhibits IKBKE kinase activity.

The protein resides in the virion. It is found in the host cytoplasm. Its function is as follows. Encapsidates the genome, protecting it from nucleases. The encapsidated genomic RNA is termed the nucleocapsid (NC). Serves as template for viral transcription and replication. The increased presence of protein N in host cell does not seem to trigger the switch from transcription to replication as observed in other negative strain RNA viruses. Through the interaction with host IKBKE, strongly inhibits the phosphorylation and nuclear translocation of host IRF3, a protein involved in interferon activation pathway, leading to the inhibition of interferon-beta and IRF3-dependent promoters activation. Also encodes a functional 3'-5' exoribonuclease that degrades preferentially dsRNA substrates and thereby participates in the suppression of interferon induction. The sequence is that of Nucleoprotein from Tamiami mammarenavirus (isolate Rat/United States/W 10777/1964) (TAMV).